The following is a 365-amino-acid chain: Peptide chain release factor 2 (365 aa).

Gln-252 is modified (N5-methylglutamine).

It belongs to the prokaryotic/mitochondrial release factor family. Post-translationally, methylated by PrmC. Methylation increases the termination efficiency of RF2.

The protein localises to the cytoplasm. Peptide chain release factor 2 directs the termination of translation in response to the peptide chain termination codons UGA and UAA. This is Peptide chain release factor 2 from Aeromonas salmonicida (strain A449).